We begin with the raw amino-acid sequence, 223 residues long: Deoxyribose-phosphate aldolase (223 aa).

The active-site Proton donor/acceptor is Asp-91. Lys-153 (schiff-base intermediate with acetaldehyde) is an active-site residue. The active-site Proton donor/acceptor is the Lys-183.

The protein belongs to the DeoC/FbaB aldolase family. DeoC type 1 subfamily.

The protein localises to the cytoplasm. The enzyme catalyses 2-deoxy-D-ribose 5-phosphate = D-glyceraldehyde 3-phosphate + acetaldehyde. It participates in carbohydrate degradation; 2-deoxy-D-ribose 1-phosphate degradation; D-glyceraldehyde 3-phosphate and acetaldehyde from 2-deoxy-alpha-D-ribose 1-phosphate: step 2/2. Catalyzes a reversible aldol reaction between acetaldehyde and D-glyceraldehyde 3-phosphate to generate 2-deoxy-D-ribose 5-phosphate. This is Deoxyribose-phosphate aldolase from Mycoplasmopsis synoviae (strain 53) (Mycoplasma synoviae).